The chain runs to 431 residues: Signal recognition particle 54 kDa protein (431 aa).

GTP is bound by residues 105 to 112, 185 to 189, and 243 to 246; these read GVEGSGKT, DTAGR, and TKMD.

Belongs to the GTP-binding SRP family. SRP54 subfamily. In terms of assembly, part of the signal recognition particle protein translocation system, which is composed of SRP and FtsY. Archaeal SRP consists of a 7S RNA molecule of 300 nucleotides and two protein subunits: SRP54 and SRP19.

It is found in the cytoplasm. It catalyses the reaction GTP + H2O = GDP + phosphate + H(+). Its function is as follows. Involved in targeting and insertion of nascent membrane proteins into the cytoplasmic membrane. Binds to the hydrophobic signal sequence of the ribosome-nascent chain (RNC) as it emerges from the ribosomes. The SRP-RNC complex is then targeted to the cytoplasmic membrane where it interacts with the SRP receptor FtsY. The protein is Signal recognition particle 54 kDa protein of Pyrobaculum calidifontis (strain DSM 21063 / JCM 11548 / VA1).